A 100-amino-acid polypeptide reads, in one-letter code: NADH-quinone oxidoreductase subunit K (100 aa).

Transmembrane regions (helical) follow at residues 1-21 (MIGL…GLAG), 28-48 (ILLL…GFVA), and 64-84 (FIIA…ILWF).

The protein belongs to the complex I subunit 4L family. In terms of assembly, NDH-1 is composed of 14 different subunits. Subunits NuoA, H, J, K, L, M, N constitute the membrane sector of the complex.

The protein resides in the cell inner membrane. It catalyses the reaction a quinone + NADH + 5 H(+)(in) = a quinol + NAD(+) + 4 H(+)(out). Its function is as follows. NDH-1 shuttles electrons from NADH, via FMN and iron-sulfur (Fe-S) centers, to quinones in the respiratory chain. The immediate electron acceptor for the enzyme in this species is believed to be ubiquinone. Couples the redox reaction to proton translocation (for every two electrons transferred, four hydrogen ions are translocated across the cytoplasmic membrane), and thus conserves the redox energy in a proton gradient. The polypeptide is NADH-quinone oxidoreductase subunit K (Helicobacter pylori (strain Shi470)).